Here is a 347-residue protein sequence, read N- to C-terminus: Phosphoribosylformylglycinamidine cyclo-ligase (347 aa).

Belongs to the AIR synthase family.

It localises to the cytoplasm. It carries out the reaction 2-formamido-N(1)-(5-O-phospho-beta-D-ribosyl)acetamidine + ATP = 5-amino-1-(5-phospho-beta-D-ribosyl)imidazole + ADP + phosphate + H(+). The protein operates within purine metabolism; IMP biosynthesis via de novo pathway; 5-amino-1-(5-phospho-D-ribosyl)imidazole from N(2)-formyl-N(1)-(5-phospho-D-ribosyl)glycinamide: step 2/2. In Prochlorococcus marinus subsp. pastoris (strain CCMP1986 / NIES-2087 / MED4), this protein is Phosphoribosylformylglycinamidine cyclo-ligase.